A 612-amino-acid polypeptide reads, in one-letter code: uncharacterized protein (612 aa).

Residues 6–32 constitute a DNA-binding region (zn(2)-C6 fungal-type); sequence CLYCRRRKIKCDKNRPCHNCFVAKREC.

The protein localises to the cytoplasm. Its subcellular location is the nucleus. This is an uncharacterized protein from Schizosaccharomyces pombe (strain 972 / ATCC 24843) (Fission yeast).